A 215-amino-acid chain; its full sequence is Large ribosomal subunit protein uL3 (215 aa).

The tract at residues 136–155 (GVSISHRSHGSTGQRQDPGK) is disordered. Q151 carries the post-translational modification N5-methylglutamine.

This sequence belongs to the universal ribosomal protein uL3 family. Part of the 50S ribosomal subunit. Forms a cluster with proteins L14 and L19. In terms of processing, methylated by PrmB.

Its function is as follows. One of the primary rRNA binding proteins, it binds directly near the 3'-end of the 23S rRNA, where it nucleates assembly of the 50S subunit. The chain is Large ribosomal subunit protein uL3 from Rickettsia rickettsii (strain Iowa).